The sequence spans 501 residues: Cytochrome P450 monooxygenase esdpH (501 aa).

Residues 5-22 (RVGILIIGVLATATFWLC) form a helical membrane-spanning segment. C446 serves as a coordination point for heme.

The protein belongs to the cytochrome P450 family. It depends on heme as a cofactor.

The protein localises to the membrane. The protein operates within secondary metabolite biosynthesis; terpenoid biosynthesis. In terms of biological role, cytochrome P450 monooxygenase; part of the cluster that mediates the biosynthesis of shearones, diterpenoid pyrones (DPs) which are structurally diverse meroterpenoids consisting of a diterpene linked by a pyrone, and which may exhibit a range of bioactivities. Whitin the pathway, esdpH takes part in the molecular scaffold modification via the hydroxylation at C-6' and can transform shearone C into shearone E, shearone D into shearone F, and shearone H into shearone I, the latter being the final product of the pathway. The molecular scaffold is commonly biosynthesized by a series of enzymes including the non-reducing polyketide synthase (NR-PKS) esdpA that generates an alpha-pyrone; the prenyltransferase esdpC that attaches a geranylgeranyl pyrophosphate (GGPP) produced by the GGPP synthase (GGPPS) esdpD onto the pyrone unit; the FAD-dependent monooxygenase esdpE that converts an olefin on the diterpene unit into an epoxide; and the terpene cyclase esdpB that catalyzes the cyclization reactions to give the molecular backbone shearone A. In the modification steps, esdpF oxidizes the hydroxy group to a ketone at C-3 and esdpG then attaches hydroxy groups at both C-11 and C-12. After that, esdpI hydroxylates at C-20 and esdpH hydroxylates at C-6'. The ether bridge is generated by nucleophilic attack of the hydroxy group at C-20 to the carbonyl carbon at C-3. EsdpH can also functions prior to esdpI. The different combinations of these modification enzymes lead to the production of diverse shearone derivatives, shearone I being the end product of the pathway. The alpha-ketoglutarate-dependent dioxygenase esdpJ seems not to be involved in this pathway. The sequence is that of Cytochrome P450 monooxygenase esdpH from Penicillium shearii (Eupenicillium shearii).